A 325-amino-acid polypeptide reads, in one-letter code: Aldo-keto reductase family 1 member A1 (325 aa).

Thr-2 bears the N-acetylthreonine mark. The residue at position 4 (Ser-4) is a Phosphoserine. NADP(+) is bound by residues 11-20, Thr-21, and Trp-22; that span reads GQKMPLIGLG. Lys-23 is a glycosylation site (N-linked (Glc) (glycation) lysine). Residue Ser-38 is modified to Phosphoserine. An NADP(+)-binding site is contributed by Asp-45. Tyr-50 serves as the catalytic Proton donor. Lys-68 and Lys-85 each carry an N-linked (Glc) (glycation) lysine glycan. The residue at position 127 (Lys-127) is an N6-acetyllysine; alternate. An N6-succinyllysine; alternate modification is found at Lys-127. N-linked (Glc) (glycation) lysine glycosylation is present at Lys-141. Residue Lys-145 is modified to N6-succinyllysine. A glycan (N-linked (Glc) (glycation) lysine) is linked at Lys-153. Positions 162, 163, 211, 213, 215, 216, 263, 264, 265, 266, 269, 272, and 273 each coordinate NADP(+). Ser-211 is modified (phosphoserine).

Belongs to the aldo/keto reductase family. Monomer. In terms of tissue distribution, widely expressed.

The protein resides in the cytoplasm. It is found in the cytosol. The protein localises to the apical cell membrane. The enzyme catalyses a primary alcohol + NADP(+) = an aldehyde + NADPH + H(+). It catalyses the reaction L-gulonate + NADP(+) = aldehydo-D-glucuronate + NADPH + H(+). It carries out the reaction L-gulono-1,4-lactone + NADP(+) = D-glucurono-3,6-lactone + NADPH + H(+). The catalysed reaction is allyl alcohol + NADP(+) = acrolein + NADPH + H(+). The enzyme catalyses glycerol + NADP(+) = D-glyceraldehyde + NADPH + H(+). It catalyses the reaction glycerol + NADP(+) = L-glyceraldehyde + NADPH + H(+). It carries out the reaction hydroxyacetone + NADP(+) = methylglyoxal + NADPH + H(+). The catalysed reaction is 3-deoxyfructose + NADP(+) = 3-deoxyglucosone + NADPH + H(+). The enzyme catalyses (R)-mevalonate + NADP(+) = (R)-mevaldate + NADPH + H(+). It catalyses the reaction pyridine 3-methanol + NADP(+) = pyridine-3-carbaldehyde + NADPH + H(+). It carries out the reaction S-nitroso-CoA + NADPH + H(+) = sulfinamide-CoA + NADP(+). The catalysed reaction is S-nitrosoglutathione + NADPH + H(+) = S-(hydroxysulfenamide)glutathione + NADP(+). Its function is as follows. Catalyzes the NADPH-dependent reduction of a wide variety of carbonyl-containing compounds to their corresponding alcohols. Displays enzymatic activity towards endogenous metabolites such as aromatic and aliphatic aldehydes, ketones, monosaccharides and bile acids. Plays an important role in ascorbic acid biosynthesis by catalyzing the reduction of D-glucuronic acid and D-glucurono-gamma-lactone. Functions as a detoxifiying enzyme by reducing a range of toxic aldehydes. Reduces methylglyoxal and 3-deoxyglucosone, which are present at elevated levels under hyperglycemic conditions and are cytotoxic. Involved also in the detoxification of lipid-derived aldehydes like acrolein. Plays a role in the activation of procarcinogens, such as polycyclic aromatic hydrocarbon trans-dihydrodiols, and in the metabolism of various xenobiotics and drugs. Also acts as an inhibitor of protein S-nitrosylation by mediating degradation of S-nitroso-coenzyme A (S-nitroso-CoA), a cofactor required to S-nitrosylate proteins. S-nitroso-CoA reductase activity is involved in reprogramming intermediary metabolism in renal proximal tubules, notably by inhibiting protein S-nitrosylation of isoform 2 of PKM (PKM2). Also acts as a S-nitroso-glutathione reductase by catalyzing the NADPH-dependent reduction of S-nitrosoglutathione. Displays no reductase activity towards retinoids. This Rattus norvegicus (Rat) protein is Aldo-keto reductase family 1 member A1 (Akr1a1).